A 151-amino-acid polypeptide reads, in one-letter code: Lipoprotein signal peptidase (151 aa).

The next 2 helical transmembrane spans lie at G61 to G81 and S88 to I107. Catalysis depends on residues D117 and D133. Residues V128–I148 traverse the membrane as a helical segment.

Belongs to the peptidase A8 family.

The protein localises to the cell inner membrane. The catalysed reaction is Release of signal peptides from bacterial membrane prolipoproteins. Hydrolyzes -Xaa-Yaa-Zaa-|-(S,diacylglyceryl)Cys-, in which Xaa is hydrophobic (preferably Leu), and Yaa (Ala or Ser) and Zaa (Gly or Ala) have small, neutral side chains.. The protein operates within protein modification; lipoprotein biosynthesis (signal peptide cleavage). Functionally, this protein specifically catalyzes the removal of signal peptides from prolipoproteins. The sequence is that of Lipoprotein signal peptidase from Synechococcus sp. (strain RCC307).